The primary structure comprises 153 residues: MAKKPYGEVTKDIVHIADVDLDGHKPIYVELRKVVGVNWMFAHAVCAALGIDKWRKIGSLSDEELEKLEDALRNPWKYGIPSWLYNRRRDPETGKDLHLVGNDYKITMEFDIKREMQINSWRGYRHREGLPVRGQRTRSHHRKGRTVGVIKKK.

Positions 132-153 (VRGQRTRSHHRKGRTVGVIKKK) are disordered. Over residues 135-153 (QRTRSHHRKGRTVGVIKKK) the composition is skewed to basic residues.

The protein belongs to the universal ribosomal protein uS13 family. In terms of assembly, part of the 30S ribosomal subunit. Forms a loose heterodimer with protein S19. Forms two bridges to the 50S subunit in the 70S ribosome.

Its function is as follows. Located at the top of the head of the 30S subunit, it contacts several helices of the 16S rRNA. In the 70S ribosome it contacts the 23S rRNA (bridge B1a) and protein L5 of the 50S subunit (bridge B1b), connecting the 2 subunits; these bridges are implicated in subunit movement. The protein is Small ribosomal subunit protein uS13 of Nanoarchaeum equitans (strain Kin4-M).